The chain runs to 428 residues: Cytochrome c biogenesis protein CcsB (428 aa).

3 consecutive transmembrane segments (helical) span residues leucine 14 to isoleucine 34, serine 72 to arginine 92, and isoleucine 162 to serine 182.

Belongs to the Ccs1/CcsB family. As to quaternary structure, may interact with CcsA.

It is found in the cellular thylakoid membrane. Functionally, required during biogenesis of c-type cytochromes (cytochrome c6 and cytochrome f) at the step of heme attachment. In Prochlorococcus marinus (strain MIT 9301), this protein is Cytochrome c biogenesis protein CcsB.